The primary structure comprises 191 residues: tRNA-specific adenosine deaminase 2 (191 aa).

Residues 20-145 (QETEKWMEEA…SVLNIASADL (126 aa)) enclose the CMP/dCMP-type deaminase domain. His-71 is a binding site for Zn(2+). Residue Glu-73 is the Proton donor of the active site. Zn(2+) is bound by residues Cys-107 and Cys-110.

The protein belongs to the cytidine and deoxycytidylate deaminase family. ADAT2 subfamily. Zn(2+) is required as a cofactor.

The catalysed reaction is adenosine(34) in tRNA + H2O + H(+) = inosine(34) in tRNA + NH4(+). Functionally, probably participates in deamination of adenosine-34 to inosine in many tRNAs. The protein is tRNA-specific adenosine deaminase 2 (Adat2) of Mus musculus (Mouse).